A 74-amino-acid polypeptide reads, in one-letter code: Conotoxin Vc6.8 (74 aa).

The N-terminal stretch at 1 to 19 (MEKLTILLLVAAVLMSTQA) is a signal peptide. Positions 20 to 34 (LMQEQRQKAKINLFS) are excised as a propeptide. Disulfide bonds link Cys-49–Cys-62, Cys-55–Cys-66, and Cys-61–Cys-70.

It belongs to the conotoxin O2 superfamily. In terms of tissue distribution, expressed by the venom duct.

It localises to the secreted. In terms of biological role, inhibits voltage-gated ion channels. This chain is Conotoxin Vc6.8, found in Conus victoriae (Queen Victoria cone).